The sequence spans 326 residues: MNSEHPMTDRVVYRSLMADNLRWDALQLRDGDIIISAPSKSGLTWTQRLVSLLVFDGPDLPGPLSTVSPWLDQTIRPIEEVVATLDAQQHRRFIKTHTPLDGLVLDDRVSYICVGRDPRDAAVSMLYQSANMNEDRMRILHEAVVPFHERIAPPFAELGHARSPTEEFRDWMEGPNQPPPGIGFTHLKGIGTLANILHQLGTVWVRRHLPNVALFHYADYQADLAGELLRPARVLGIAATRDRARDLAQYATLDAMRSRASEIAPNTTDGIWHSDERFFRRGGSGDWQQFFTEAEHLRYYHRINQLAPPDLLAWAHEGRRGYDPAN.

40–45 (KSGLTW) contacts 3'-phosphoadenylyl sulfate. Residue His97 is the Proton acceptor of the active site. 3'-phosphoadenylyl sulfate is bound at residue 116-124 (RDPRDAAVS).

It belongs to the sulfotransferase 1 family.

Involved in the synthesis of cell wall sulfolipids. In Mycobacterium tuberculosis (strain ATCC 25177 / H37Ra), this protein is Glycolipid sulfotransferase MRA_1383.